The sequence spans 235 residues: Probable transcriptional regulatory protein Cla_1081 (235 aa).

This sequence belongs to the TACO1 family.

Its subcellular location is the cytoplasm. This chain is Probable transcriptional regulatory protein Cla_1081, found in Campylobacter lari (strain RM2100 / D67 / ATCC BAA-1060).